Here is a 405-residue protein sequence, read N- to C-terminus: Acetylornithine/succinyldiaminopimelate aminotransferase (405 aa).

Residues 108 to 109 and Phe-141 contribute to the pyridoxal 5'-phosphate site; that span reads GT. Arg-144 serves as a coordination point for N(2)-acetyl-L-ornithine. 226 to 229 lines the pyridoxal 5'-phosphate pocket; that stretch reads DEVQ. The residue at position 255 (Lys-255) is an N6-(pyridoxal phosphate)lysine. Ser-283 provides a ligand contact to N(2)-acetyl-L-ornithine. Thr-284 provides a ligand contact to pyridoxal 5'-phosphate.

The protein belongs to the class-III pyridoxal-phosphate-dependent aminotransferase family. ArgD subfamily. In terms of assembly, homodimer. Requires pyridoxal 5'-phosphate as cofactor.

It is found in the cytoplasm. It catalyses the reaction N(2)-acetyl-L-ornithine + 2-oxoglutarate = N-acetyl-L-glutamate 5-semialdehyde + L-glutamate. The enzyme catalyses N-succinyl-(2S,6S)-2,6-diaminopimelate + 2-oxoglutarate = (S)-2-succinylamino-6-oxoheptanedioate + L-glutamate. Its pathway is amino-acid biosynthesis; L-arginine biosynthesis; N(2)-acetyl-L-ornithine from L-glutamate: step 4/4. The protein operates within amino-acid biosynthesis; L-lysine biosynthesis via DAP pathway; LL-2,6-diaminopimelate from (S)-tetrahydrodipicolinate (succinylase route): step 2/3. Functionally, involved in both the arginine and lysine biosynthetic pathways. The protein is Acetylornithine/succinyldiaminopimelate aminotransferase of Salmonella typhi.